Consider the following 625-residue polypeptide: Protein arginine N-methyltransferase skb1 (625 aa).

One can recognise an SAM-dependent MTase PRMT-type domain in the interval 280–588; the sequence is LQVPLQPLSY…WRLTDGMRVW (309 aa). Residues Tyr296, 305–306, Glu359, and 386–387 each bind S-adenosyl-L-methionine; these read KY and DM. Residues Glu402 and Glu411 each act as proton donor/acceptor in the active site.

It belongs to the class I-like SAM-binding methyltransferase superfamily. Protein arginine N-methyltransferase family. In terms of assembly, interacts with the N-terminal regulatory domain of shk1. Shk1, cdc42 and skb1 are able to form a ternary complex in vivo. Interacts with orb6. Interacts with Cdr1 and the Cdr1 inhibitory target Wee1.

It localises to the nucleus. Its subcellular location is the cell tip. The protein resides in the cell septum. It is found in the cytoplasm. The protein localises to the cell cortex. Its function is as follows. S-adenosyl-L-methionine-dependent protein-arginine N-methyltransferase that can catalyze both the mono- and symmetric (type II) dimethylation of the guanidino nitrogens of arginine residues in target proteins. Delays mitotic entry by inhibiting the Cdr1-Wee1 signaling pathway. Cortical nodes sequester Skb1 from its regulatory targets Cdr1 and Wee1. Positively modulates the shk1 kinase function. May be a mediator of hyperosmotic stress response. Involved in the control of cell polarity by regulating the subcellular localization of Orb6 kinase. The protein is Protein arginine N-methyltransferase skb1 of Schizosaccharomyces pombe (strain 972 / ATCC 24843) (Fission yeast).